A 543-amino-acid polypeptide reads, in one-letter code: CTP synthase (543 aa).

An amidoligase domain region spans residues 1 to 267; the sequence is MKQTKYIFVT…LNPIAEILDL (267 aa). Ser15 is a binding site for CTP. Ser15 contributes to the UTP binding site. Residues 16–21 and Asp73 each bind ATP; that span reads SLGKGI. The Mg(2+) site is built by Asp73 and Glu141. CTP is bound by residues 148–150, 188–193, and Lys224; these read DIE and KTKPTQ. UTP contacts are provided by residues 188-193 and Lys224; that span reads KTKPTQ. Positions 292-543 constitute a Glutamine amidotransferase type-1 domain; sequence KIAFVGKYVD…IKAAINYEDN (252 aa). Gly354 provides a ligand contact to L-glutamine. Cys381 serves as the catalytic Nucleophile; for glutamine hydrolysis. Residues 382–385, Glu405, and Arg473 each bind L-glutamine; that span reads LGMQ. Residues His516 and Glu518 contribute to the active site.

The protein belongs to the CTP synthase family. As to quaternary structure, homotetramer.

It catalyses the reaction UTP + L-glutamine + ATP + H2O = CTP + L-glutamate + ADP + phosphate + 2 H(+). The catalysed reaction is L-glutamine + H2O = L-glutamate + NH4(+). The enzyme catalyses UTP + NH4(+) + ATP = CTP + ADP + phosphate + 2 H(+). It participates in pyrimidine metabolism; CTP biosynthesis via de novo pathway; CTP from UDP: step 2/2. With respect to regulation, allosterically activated by GTP, when glutamine is the substrate; GTP has no effect on the reaction when ammonia is the substrate. The allosteric effector GTP functions by stabilizing the protein conformation that binds the tetrahedral intermediate(s) formed during glutamine hydrolysis. Inhibited by the product CTP, via allosteric rather than competitive inhibition. Its function is as follows. Catalyzes the ATP-dependent amination of UTP to CTP with either L-glutamine or ammonia as the source of nitrogen. Regulates intracellular CTP levels through interactions with the four ribonucleotide triphosphates. The protein is CTP synthase of Campylobacter jejuni subsp. doylei (strain ATCC BAA-1458 / RM4099 / 269.97).